Reading from the N-terminus, the 593-residue chain is A-type ATP synthase subunit A (593 aa).

236–243 (GPFGSGKT) contacts ATP.

Belongs to the ATPase alpha/beta chains family. In terms of assembly, has multiple subunits with at least A(3), B(3), C, D, E, F, H, I and proteolipid K(x).

The protein resides in the cell membrane. The catalysed reaction is ATP + H2O + 4 H(+)(in) = ADP + phosphate + 5 H(+)(out). Functionally, component of the A-type ATP synthase that produces ATP from ADP in the presence of a proton gradient across the membrane. The A chain is the catalytic subunit. The sequence is that of A-type ATP synthase subunit A from Pyrobaculum islandicum (strain DSM 4184 / JCM 9189 / GEO3).